A 942-amino-acid chain; its full sequence is Isoleucine--tRNA ligase (942 aa).

Residues 58–68 (PYANGDIHIGH) carry the 'HIGH' region motif. Position 566 (Glu566) interacts with L-isoleucyl-5'-AMP. Residues 607 to 611 (KMSKS) carry the 'KMSKS' region motif. An ATP-binding site is contributed by Lys610. Zn(2+) contacts are provided by Cys905, Cys908, Cys925, and Cys928.

Belongs to the class-I aminoacyl-tRNA synthetase family. IleS type 1 subfamily. Monomer. Zn(2+) is required as a cofactor.

Its subcellular location is the cytoplasm. It carries out the reaction tRNA(Ile) + L-isoleucine + ATP = L-isoleucyl-tRNA(Ile) + AMP + diphosphate. Catalyzes the attachment of isoleucine to tRNA(Ile). As IleRS can inadvertently accommodate and process structurally similar amino acids such as valine, to avoid such errors it has two additional distinct tRNA(Ile)-dependent editing activities. One activity is designated as 'pretransfer' editing and involves the hydrolysis of activated Val-AMP. The other activity is designated 'posttransfer' editing and involves deacylation of mischarged Val-tRNA(Ile). This is Isoleucine--tRNA ligase from Vibrio parahaemolyticus serotype O3:K6 (strain RIMD 2210633).